The sequence spans 91 residues: Small ribosomal subunit protein uS15 (91 aa).

Belongs to the universal ribosomal protein uS15 family. Part of the 30S ribosomal subunit. Forms a bridge to the 50S subunit in the 70S ribosome, contacting the 23S rRNA.

In terms of biological role, one of the primary rRNA binding proteins, it binds directly to 16S rRNA where it helps nucleate assembly of the platform of the 30S subunit by binding and bridging several RNA helices of the 16S rRNA. Forms an intersubunit bridge (bridge B4) with the 23S rRNA of the 50S subunit in the ribosome. This Sulfurimonas denitrificans (strain ATCC 33889 / DSM 1251) (Thiomicrospira denitrificans (strain ATCC 33889 / DSM 1251)) protein is Small ribosomal subunit protein uS15.